We begin with the raw amino-acid sequence, 267 residues long: L-aspartate dehydrogenase (267 aa).

The NAD(+) site is built by Ala-124 and Asn-190. His-220 is a catalytic residue.

Belongs to the L-aspartate dehydrogenase family.

It catalyses the reaction L-aspartate + NADP(+) + H2O = oxaloacetate + NH4(+) + NADPH + H(+). It carries out the reaction L-aspartate + NAD(+) + H2O = oxaloacetate + NH4(+) + NADH + H(+). Its pathway is cofactor biosynthesis; NAD(+) biosynthesis; iminoaspartate from L-aspartate (dehydrogenase route): step 1/1. Specifically catalyzes the NAD or NADP-dependent dehydrogenation of L-aspartate to iminoaspartate. This is L-aspartate dehydrogenase from Ralstonia pickettii (strain 12J).